The sequence spans 324 residues: Phospho-N-acetylmuramoyl-pentapeptide-transferase (324 aa).

The next 10 helical transmembrane spans lie at 5–25 (VMVLAIILSFLITVILSPLFI), 50–70 (GTPTMGGIMILLSIVVTTLLM), 77–97 (LSVETYLLLFVTIGYGLLGFL), 117–137 (LIGQLMIAIVFYFVYQRSGFS), 147–167 (LSINLGFGYVLLLIFMLVGGS), 176–196 (LDGLLAGTAAIAFGAYAVLAW), 203–223 (IAIFCVSVVGAVLGFLVFNAH), 227–247 (VFMGDTGSLALGGAIATVAIL), 250–270 (LEILLVIIGGVFVIETLSVII), and 304–324 (VTFWAVGLLFAMLGIYIEVWI).

This sequence belongs to the glycosyltransferase 4 family. MraY subfamily. Mg(2+) serves as cofactor.

The protein resides in the cell membrane. It carries out the reaction UDP-N-acetyl-alpha-D-muramoyl-L-alanyl-gamma-D-glutamyl-meso-2,6-diaminopimeloyl-D-alanyl-D-alanine + di-trans,octa-cis-undecaprenyl phosphate = di-trans,octa-cis-undecaprenyl diphospho-N-acetyl-alpha-D-muramoyl-L-alanyl-D-glutamyl-meso-2,6-diaminopimeloyl-D-alanyl-D-alanine + UMP. Its pathway is cell wall biogenesis; peptidoglycan biosynthesis. In terms of biological role, catalyzes the initial step of the lipid cycle reactions in the biosynthesis of the cell wall peptidoglycan: transfers peptidoglycan precursor phospho-MurNAc-pentapeptide from UDP-MurNAc-pentapeptide onto the lipid carrier undecaprenyl phosphate, yielding undecaprenyl-pyrophosphoryl-MurNAc-pentapeptide, known as lipid I. This Geobacillus sp. (strain WCH70) protein is Phospho-N-acetylmuramoyl-pentapeptide-transferase.